A 330-amino-acid polypeptide reads, in one-letter code: Methionyl-tRNA formyltransferase (330 aa).

Residue 112–115 (SLLP) coordinates (6S)-5,6,7,8-tetrahydrofolate.

This sequence belongs to the Fmt family.

The catalysed reaction is L-methionyl-tRNA(fMet) + (6R)-10-formyltetrahydrofolate = N-formyl-L-methionyl-tRNA(fMet) + (6S)-5,6,7,8-tetrahydrofolate + H(+). Functionally, attaches a formyl group to the free amino group of methionyl-tRNA(fMet). The formyl group appears to play a dual role in the initiator identity of N-formylmethionyl-tRNA by promoting its recognition by IF2 and preventing the misappropriation of this tRNA by the elongation apparatus. The protein is Methionyl-tRNA formyltransferase of Alcanivorax borkumensis (strain ATCC 700651 / DSM 11573 / NCIMB 13689 / SK2).